A 210-amino-acid chain; its full sequence is Eukaryotic translation initiation factor 2 subunit gamma (210 aa).

Residues 1–196 (IGHVAHGKST…HLVETITPPR (196 aa)) enclose the tr-type G domain. The G1 stretch occupies residues 2–9 (GHVAHGKS). 5 to 10 (AHGKST) is a binding site for GTP. A G2 region spans residues 30 to 34 (NITIK). The G3 stretch occupies residues 85 to 88 (DCPG). GTP contacts are provided by residues 141–144 (NKID) and 174–176 (SAI). Residues 141–144 (NKID) form a G4 region. The G5 stretch occupies residues 174–176 (SAI).

It belongs to the TRAFAC class translation factor GTPase superfamily. Classic translation factor GTPase family. EIF2G subfamily. As to quaternary structure, eukaryotic translation initiation factor 2 eIF2 is a heterotrimeric complex composed of an alpha, a beta and a gamma subunit. The factors eIF-1, eIF-2, eIF-3, TIF5/eIF-5 and methionyl-tRNAi form a multifactor complex (MFC) that may bind to the 40S ribosome.

Its subcellular location is the cytoplasm. It localises to the cytosol. It carries out the reaction GTP + H2O = GDP + phosphate + H(+). As a subunit of eukaryotic initiation factor 2 eIF2, involved in the early steps of protein synthesis. In the presence of GTP, eIF-2 forms a ternary complex with initiator tRNA Met-tRNAi and then recruits the 40S ribosomal complex and initiation factors eIF-1, eIF-1A and eIF-3 to form the 43S pre-initiation complex (43S PIC), a step that determines the rate of protein translation. The 43S PIC binds to mRNA and scans downstream to the initiation codon, where it forms a 48S initiation complex by codon-anticodon base pairing. This leads to the displacement of eIF-1 to allow GTPase-activating protein (GAP) eIF-5-mediated hydrolysis of eIF2-bound GTP. Hydrolysis of GTP and release of Pi, which makes GTP hydrolysis irreversible, causes the release of the eIF-2-GDP binary complex from the 40S subunit, an event that is essential for the subsequent joining of the 60S ribosomal subunit to form an elongation-competent 80S ribosome. In order for eIF-2 to recycle and catalyze another round of initiation, the GDP bound to eIF-2 must be exchanged with GTP by way of a reaction catalyzed by GDP-GTP exchange factor (GEF) eIF-2B. In Spironucleus vortens, this protein is Eukaryotic translation initiation factor 2 subunit gamma.